A 2517-amino-acid polypeptide reads, in one-letter code: Protein capicua homolog (2517 aa).

6 disordered regions span residues 1–197 (MKPM…SGSY), 300–325 (LSPG…HREP), 342–483 (PWEP…KYKK), 531–579 (EMEG…RGDS), 608–640 (SSRS…FGFR), and 658–767 (VRSR…FRAV). Residues 57–67 (EEAEEGEEEEA) show a composition bias toward acidic residues. Basic and acidic residues predominate over residues 91–101 (EDPKGDGEAGR). Composition is skewed to low complexity over residues 158–167 (TSTRSSSTDT) and 300–313 (LSPG…LPGS). Basic and acidic residues predominate over residues 396 to 405 (HCEEGEEKHP). Pro residues predominate over residues 414 to 428 (LPLPPPQLLSPPPKS). The segment covering 451-477 (GSRSSSVASLEKGTAPAARARTPLTAA) has biased composition (low complexity). Residues 608-619 (SSRSGTPSFSPV) are compositionally biased toward polar residues. Positions 677–686 (DLGPHPPPPA) are enriched in pro residues. Positions 698–707 (TFQTNLTFTV) are enriched in polar residues. Residues 726-735 (GAPGAGGGGA) are compositionally biased toward gly residues. Residues S776 and S780 each carry the phosphoserine modification. Disordered regions lie at residues 812 to 842 (IVRN…PGRG), 955 to 1110 (PSQP…DHIR), 1179 to 1220 (CNKD…APGV), 1235 to 1274 (SDTK…SLDG), 1290 to 1347 (SGPA…TSDE), 1379 to 1539 (RVTD…ILQT), and 1595 to 1628 (IASK…RVPG). The interaction with ATXN1 stretch occupies residues 937–955 (EPRSVAVFPWHSLVPFLAP). Residues 959-981 (DPSVQPSEAQQPASHPVASNQSK) are compositionally biased toward polar residues. Residues S1055 and S1082 each carry the phosphoserine modification. 3 stretches are compositionally biased toward basic and acidic residues: residues 1087–1110 (PKER…DHIR), 1179–1188 (CNKDRKKSSS), and 1200–1209 (GHKETRERSM). R1099 is subject to Omega-N-methylarginine. Positions 1109–1177 (IRRPMNAFMI…AHFKAHPDWK (69 aa)) form a DNA-binding region, HMG box. S1186 is subject to Phosphoserine. Positions 1235 to 1245 (SDTKAPGSSSC) are enriched in polar residues. At S1271 the chain carries Phosphoserine. Residues 1305–1323 (GAPGPFAAPGEGGALAATG) are compositionally biased toward low complexity. 3 positions are modified to phosphoserine: S1340, S1345, and S1405. A compositionally biased stretch (pro residues) spans 1418–1430 (PLDPEPPGPPDPP). The segment covering 1439-1456 (SAPSSSASSPASSSASAA) has biased composition (low complexity). The segment covering 1457 to 1474 (TSFSLGSGTFKAQESGQG) has biased composition (polar residues). 3 positions are modified to phosphoserine: S1609, S1630, and S1648. An Asymmetric dimethylarginine modification is found at R1772. Positions 1799 to 1818 (QSVPSAPPPKAQSVSPVQAP) are disordered. An Omega-N-methylarginine modification is found at R1843. Disordered stretches follow at residues 2039 to 2064 (AATI…FPSA), 2100 to 2342 (SFEA…AKCE), and 2430 to 2517 (AATP…ATGR). The segment covering 2051 to 2064 (ATATPAPTSPFPSA) has biased composition (low complexity). Composition is skewed to pro residues over residues 2110-2119 (GPAPRQPLEP) and 2136-2145 (PTPPAPPPLP). A compositionally biased stretch (low complexity) spans 2146–2155 (ETWTPTARSS). An N6-acetyllysine modification is found at K2177. The span at 2198–2209 (PPTPPSPAPAPA) shows a compositional bias: pro residues. The residue at position 2200 (T2200) is a Phosphothreonine. S2203 is subject to Phosphoserine. The segment covering 2210-2225 (VAPGGSSESSSGRAAG) has biased composition (low complexity). A compositionally biased stretch (basic and acidic residues) spans 2249–2278 (KTFDSVDNRVLSEVDFEERFAELPEFRPEE). Residues S2260, S2282, S2287, S2291, S2298, and S2306 each carry the phosphoserine modification. T2307 carries the phosphothreonine modification. Phosphoserine occurs at positions 2311 and 2318. Positions 2457 to 2469 (APTPSPAGGPDPT) are enriched in pro residues. A Phosphoserine modification is found at S2504.

As to quaternary structure, found in a complex with ATXN1 and ATXN1L. Interacts with ATXN1. Expressed in fetal brain.

It is found in the nucleus. In terms of biological role, transcriptional repressor which plays a role in development of the central nervous system (CNS). In concert with ATXN1 and ATXN1L, involved in brain development. This chain is Protein capicua homolog (CIC), found in Homo sapiens (Human).